An 82-amino-acid polypeptide reads, in one-letter code: Beta-insect depressant toxin LqqIT2 (82 aa).

An N-terminal signal peptide occupies residues 1 to 21; sequence MKLLLLLIVSASMLIESLVNA. The 61-residue stretch at 22-82 folds into the LCN-type CS-alpha/beta domain; the sequence is DGYIRKRDGC…TWKSETNTCG (61 aa). 4 cysteine pairs are disulfide-bonded: C31/C81, C35/C56, C42/C63, and C46/C65.

The protein belongs to the long (4 C-C) scorpion toxin superfamily. Sodium channel inhibitor family. Beta subfamily. In terms of tissue distribution, expressed by the venom gland.

The protein resides in the secreted. Its function is as follows. Depressant insect beta-toxins cause a transient contraction paralysis followed by a slow flaccid paralysis. They bind voltage-independently at site-4 of sodium channels and shift the voltage of activation toward more negative potentials thereby affecting sodium channel activation and promoting spontaneous and repetitive firing. Aside from typical beta-toxin effects, this toxin also affects the inactivation process and ion selectivity of the insect voltage-gated sodium channel. This toxin is active only on insects. Is active on the insect voltage-gated sodium channel para. In vivo, when injected intraperitoneally, it exhibits analgesic activity, increasing hot plate and tail flick withdrawal latencies in a dose-dependent fashion. This phenomenon might be partly due to an inhibitory mechanism activated by noxious stimuli. The polypeptide is Beta-insect depressant toxin LqqIT2 (Leiurus quinquestriatus quinquestriatus (Egyptian scorpion)).